Reading from the N-terminus, the 146-residue chain is Coactosin (146 aa).

The region spanning 1–132 is the ADF-H domain; that stretch reads MADVSSTELK…NEEELMTKVR (132 aa).

Belongs to the actin-binding proteins ADF family. Coactosin subfamily. The N-terminus is blocked.

It is found in the cytoplasm. It localises to the cytoskeleton. Functionally, binds to F-actin in a calcium independent manner. Binds to the filaments along their length. The sequence is that of Coactosin (coaA) from Dictyostelium discoideum (Social amoeba).